We begin with the raw amino-acid sequence, 273 residues long: Dermonecrotic toxin LafSicTox-betaIE1 (273 aa).

Histidine 5 is an active-site residue. Positions 25 and 27 each coordinate Mg(2+). Residue histidine 41 is the Nucleophile of the active site. 2 disulfides stabilise this stretch: cysteine 45–cysteine 51 and cysteine 47–cysteine 189. Position 85 (aspartate 85) interacts with Mg(2+). Asparagine 250 carries N-linked (GlcNAc...) asparagine glycosylation.

The protein belongs to the arthropod phospholipase D family. Class II subfamily. Mg(2+) is required as a cofactor. Expressed by the venom gland.

It localises to the secreted. It catalyses the reaction an N-(acyl)-sphingosylphosphocholine = an N-(acyl)-sphingosyl-1,3-cyclic phosphate + choline. The catalysed reaction is an N-(acyl)-sphingosylphosphoethanolamine = an N-(acyl)-sphingosyl-1,3-cyclic phosphate + ethanolamine. The enzyme catalyses a 1-acyl-sn-glycero-3-phosphocholine = a 1-acyl-sn-glycero-2,3-cyclic phosphate + choline. It carries out the reaction a 1-acyl-sn-glycero-3-phosphoethanolamine = a 1-acyl-sn-glycero-2,3-cyclic phosphate + ethanolamine. In terms of biological role, dermonecrotic toxins cleave the phosphodiester linkage between the phosphate and headgroup of certain phospholipids (sphingolipid and lysolipid substrates), forming an alcohol (often choline) and a cyclic phosphate. This toxin acts on sphingomyelin (SM). It may also act on ceramide phosphoethanolamine (CPE), lysophosphatidylcholine (LPC) and lysophosphatidylethanolamine (LPE), but not on lysophosphatidylserine (LPS), and lysophosphatidylglycerol (LPG). It acts by transphosphatidylation, releasing exclusively cyclic phosphate products as second products. Induces dermonecrosis, hemolysis, increased vascular permeability, edema, inflammatory response, and platelet aggregation. In Loxosceles aff. spinulosa (strain GJB-2008) (Recluse spider), this protein is Dermonecrotic toxin LafSicTox-betaIE1.